The primary structure comprises 321 residues: Probable transaldolase (321 aa).

Lys133 functions as the Schiff-base intermediate with substrate in the catalytic mechanism.

The protein belongs to the transaldolase family. Type 1 subfamily. Homodimer.

It is found in the cytoplasm. The enzyme catalyses D-sedoheptulose 7-phosphate + D-glyceraldehyde 3-phosphate = D-erythrose 4-phosphate + beta-D-fructose 6-phosphate. Its pathway is carbohydrate degradation; pentose phosphate pathway; D-glyceraldehyde 3-phosphate and beta-D-fructose 6-phosphate from D-ribose 5-phosphate and D-xylulose 5-phosphate (non-oxidative stage): step 2/3. Functionally, transaldolase is important for the balance of metabolites in the pentose-phosphate pathway. This Dictyostelium discoideum (Social amoeba) protein is Probable transaldolase (tal).